The following is a 337-amino-acid chain: MQEERRLAVLRAIVEDYVATEEPVGSKALVERHGLGVSPATVRNDMAALEDEGYITQPHTSAGRVPTDKGYRLFVDRLTTIKPMSTAEKRAIATILDGAIDLDDVVQRSVRLLAQLTRQVAVVQYPTLSRSTVRHIELVALTPTRLLVVLILSTGRVEQRLVDLAAELGEEDLADLRTVVNRAALGEIIADAATALRALVPAEDATPTGAVVDVLVEAMSDHRSDERIAVGGAANLARFGDSFDSAVRPLLEALEEHVVLLKLLGEATAGEILTVRIGHEGPYQELSSTSVVATGYGPGDEALARLGIVGPTRMDYAGSMAAVRAVARYVSRILDEG.

Belongs to the HrcA family.

In terms of biological role, negative regulator of class I heat shock genes (grpE-dnaK-dnaJ and groELS operons). Prevents heat-shock induction of these operons. The protein is Heat-inducible transcription repressor HrcA of Nocardioides sp. (strain ATCC BAA-499 / JS614).